The sequence spans 282 residues: Pantothenate synthetase (282 aa).

30-37 (MGNLHDGH) serves as a coordination point for ATP. The active-site Proton donor is His-37. (R)-pantoate is bound at residue Gln-61. Gln-61 contacts beta-alanine. 149-152 (GEKD) provides a ligand contact to ATP. Residue Gln-155 coordinates (R)-pantoate. Residue 186-189 (MSSR) coordinates ATP.

The protein belongs to the pantothenate synthetase family. In terms of assembly, homodimer.

The protein localises to the cytoplasm. It carries out the reaction (R)-pantoate + beta-alanine + ATP = (R)-pantothenate + AMP + diphosphate + H(+). Its pathway is cofactor biosynthesis; (R)-pantothenate biosynthesis; (R)-pantothenate from (R)-pantoate and beta-alanine: step 1/1. Catalyzes the condensation of pantoate with beta-alanine in an ATP-dependent reaction via a pantoyl-adenylate intermediate. This Alteromonas mediterranea (strain DSM 17117 / CIP 110805 / LMG 28347 / Deep ecotype) protein is Pantothenate synthetase.